The chain runs to 189 residues: Selenoprotein S (189 aa).

The helical transmembrane segment at 29–49 threads the bilayer; sequence VVLSSYGWYILLGCILIYLLI. Positions 114 to 125 are enriched in basic and acidic residues; that stretch reads IETWDRMKEGKS. Positions 114–189 are disordered; it reads IETWDRMKEG…RRGPSSGGUG (76 aa). The segment covering 136-147 has biased composition (low complexity); sequence PSPSTSTSAATK. Basic and acidic residues predominate over residues 148–157; sequence PKQEKQERKT. A non-standard amino acid (selenocysteine) is located at residue selenocysteine 188.

The protein belongs to the selenoprotein S family.

The protein localises to the endoplasmic reticulum membrane. Its subcellular location is the cytoplasm. Its function is as follows. Involved in the degradation process of misfolded endoplasmic reticulum (ER) luminal proteins. Participates in the transfer of misfolded proteins from the ER to the cytosol, where they are destroyed by the proteasome in a ubiquitin-dependent manner. The protein is Selenoprotein S (vimp) of Xenopus tropicalis (Western clawed frog).